Consider the following 186-residue polypeptide: Elongation factor P (186 aa).

It belongs to the elongation factor P family.

Its subcellular location is the cytoplasm. It participates in protein biosynthesis; polypeptide chain elongation. In terms of biological role, involved in peptide bond synthesis. Stimulates efficient translation and peptide-bond synthesis on native or reconstituted 70S ribosomes in vitro. Probably functions indirectly by altering the affinity of the ribosome for aminoacyl-tRNA, thus increasing their reactivity as acceptors for peptidyl transferase. In Maridesulfovibrio salexigens (strain ATCC 14822 / DSM 2638 / NCIMB 8403 / VKM B-1763) (Desulfovibrio salexigens), this protein is Elongation factor P.